The chain runs to 341 residues: Transcription factor ETV7 (341 aa).

Residues 33–117 enclose the PNT domain; that stretch reads NLLGEGGICK…ELLQYIKTQR (85 aa). Positions 224-305 form a DNA-binding region, ETS; that stretch reads RLLWDYVYQL…PGQKLLFRFL (82 aa). Residues 315–341 form a disordered region; sequence KHSHLEPLESQEQDRIEFKDKRPEISP.

The protein belongs to the ETS family. Expressed in hematopoietic tissues.

Its subcellular location is the nucleus. Transcriptional repressor; binds to the DNA sequence 5'-CCGGAAGT-3'. Isoform A does not seem to have a repressor activity. Isoform C does not seem to have a repressor activity. The protein is Transcription factor ETV7 (ETV7) of Homo sapiens (Human).